The chain runs to 356 residues: Heparan sulfate 2-O-sulfotransferase 1 (356 aa).

Over 1-11 the chain is Cytoplasmic; it reads MGLLRIMMPPK. Residues 12–28 traverse the membrane as a helical; Signal-anchor for type II membrane protein segment; it reads LQLLAVVAFAVAMLFLE. Residues 24–51 are a coiled coil; it reads MLFLENQIQKLEESRAKLERAIARHEVR. Over 29–356 the chain is Lumenal; sequence NQIQKLEESR…FYEKIYPKSN (328 aa). The adenosine 3',5'-bisphosphate site is built by lysine 83, threonine 84, alanine 85, serine 86, threonine 87, and serine 88. Asparagine 108 and asparagine 127 each carry an N-linked (GlcNAc...) asparagine glycan. Active-site residues include histidine 140 and histidine 142. The adenosine 3',5'-bisphosphate site is built by arginine 164 and serine 172. Disulfide bonds link cysteine 201/cysteine 209 and cysteine 222/cysteine 228. Residues tyrosine 279, serine 285, threonine 290, and lysine 293 each contribute to the adenosine 3',5'-bisphosphate site.

It belongs to the sulfotransferase 3 family. As to quaternary structure, homotrimer. Interacts with the C5-epimerase GLCE. Post-translationally, N-glycosylated. In terms of tissue distribution, widely expressed. Expressed at higher level in lung and brain. Weakly expressed in spleen.

Its subcellular location is the golgi apparatus membrane. Functionally, catalyzes the transfer of a sulfo group from 3'-phospho-5'-adenylyl sulfate (PAPS) to the 2-OH position of iduronic acid (IdoA) or glucuronic acid (GlcA) within the heparan sulfate (HS) chain and participates in HS biosynthesis. Required for metanephric development of kidney formation, suggesting that 2-O-sulfation within HS is essential for signaling between ureteric bud and metanephric mesenchyme. The chain is Heparan sulfate 2-O-sulfotransferase 1 from Mus musculus (Mouse).